The chain runs to 82 residues: Metallothionein (82 aa).

Cd(2+) is bound by residues cysteine 6, cysteine 8, cysteine 11, cysteine 13, cysteine 29, cysteine 33, histidine 37, cysteine 43, cysteine 48, and cysteine 50. Residues cysteine 6, cysteine 8, and cysteine 11 each contribute to the Zn(2+) site. Positions 29, 33, 37, 43, 48, and 50 each coordinate Zn(2+). The disordered stretch occupies residues 61–82 (ITNNQLDEALEETFPASDPISP).

The protein belongs to the metallothionein superfamily.

In terms of biological role, metallothioneins are small proteins that have a high content of cysteine residues which allow them to bind heavy metal ions through clusters of thiolate bonds. Preferentially, binds four Cd(2+) ions. Also binds three Zn(2+) ions but with less affinity. Required for long-term viability. May play a role in the storage or sequestration of metals when present in excess. The polypeptide is Metallothionein (Pseudomonas fluorescens (strain Q2-87)).